Consider the following 92-residue polypeptide: DNA/RNA-binding protein Alba (92 aa).

K11 is modified (N6-acetyllysine).

It belongs to the histone-like Alba family. In terms of processing, acetylated. Acetylation at Lys-11 decreases DNA-binding affinity.

The protein resides in the cytoplasm. It is found in the chromosome. Binds double-stranded DNA tightly but without sequence specificity. Involved in DNA compaction. The protein is DNA/RNA-binding protein Alba of Pyrobaculum calidifontis (strain DSM 21063 / JCM 11548 / VA1).